A 407-amino-acid polypeptide reads, in one-letter code: Shaggy-related protein kinase iota (407 aa).

The span at 1-19 (MASLPLGPQPHALAPPLQL) shows a compositional bias: low complexity. Residues 1–23 (MASLPLGPQPHALAPPLQLHDGD) form a disordered region. Alanine 2 is modified (N-acetylalanine). Residues 70-354 (YMAERVVGTG…ALEACAHPFF (285 aa)) form the Protein kinase domain. ATP-binding positions include 76 to 84 (VGTGSFGIV) and lysine 99. Aspartate 195 serves as the catalytic Proton acceptor. A Phosphotyrosine modification is found at tyrosine 230.

The protein belongs to the protein kinase superfamily. CMGC Ser/Thr protein kinase family. GSK-3 subfamily. In terms of assembly, binds to KIB1. Interacts with BSK6. In terms of processing, autophosphorylated mainly on threonine and serine residues.

It carries out the reaction L-seryl-[protein] + ATP = O-phospho-L-seryl-[protein] + ADP + H(+). The enzyme catalyses L-threonyl-[protein] + ATP = O-phospho-L-threonyl-[protein] + ADP + H(+). Functionally, phosphorylates BSK1, BSK3, BSK5, BSK6, BSK8 and BSK11 in vitro. May mediate extracellular signals to regulate transcription in differentiating cells. The protein is Shaggy-related protein kinase iota (ASK9) of Arabidopsis thaliana (Mouse-ear cress).